A 184-amino-acid chain; its full sequence is ATP-dependent protease subunit HslV (184 aa).

Residue Thr-12 is part of the active site. Residues Ala-166, Cys-169, and Thr-172 each coordinate Na(+).

Belongs to the peptidase T1B family. HslV subfamily. A double ring-shaped homohexamer of HslV is capped on each side by a ring-shaped HslU homohexamer. The assembly of the HslU/HslV complex is dependent on binding of ATP.

The protein localises to the cytoplasm. It catalyses the reaction ATP-dependent cleavage of peptide bonds with broad specificity.. With respect to regulation, allosterically activated by HslU binding. Its function is as follows. Protease subunit of a proteasome-like degradation complex believed to be a general protein degrading machinery. The chain is ATP-dependent protease subunit HslV from Brucella canis (strain ATCC 23365 / NCTC 10854 / RM-666).